The following is a 195-amino-acid chain: dCTP deaminase (195 aa).

DCTP is bound by residues 105-110, aspartate 123, 131-133, glutamine 152, tyrosine 166, lysine 173, and glutamine 177; these read RSSLGR and TLE. Glutamate 133 functions as the Proton donor/acceptor in the catalytic mechanism. Positions 159-195 are disordered; that stretch reads KSPAERPYGAERGSKYQGQTGPQASRIQGDREFGGDQ. The span at 160–172 shows a compositional bias: basic and acidic residues; that stretch reads SPAERPYGAERGS. The span at 174-184 shows a compositional bias: polar residues; it reads YQGQTGPQASR. Over residues 186-195 the composition is skewed to basic and acidic residues; the sequence is QGDREFGGDQ.

The protein belongs to the dCTP deaminase family. Homotrimer.

The enzyme catalyses dCTP + H2O + H(+) = dUTP + NH4(+). The protein operates within pyrimidine metabolism; dUMP biosynthesis; dUMP from dCTP (dUTP route): step 1/2. Functionally, catalyzes the deamination of dCTP to dUTP. This chain is dCTP deaminase, found in Natronomonas pharaonis (strain ATCC 35678 / DSM 2160 / CIP 103997 / JCM 8858 / NBRC 14720 / NCIMB 2260 / Gabara) (Halobacterium pharaonis).